The primary structure comprises 732 residues: E3 ubiquitin-protein ligase hel2 (732 aa).

The segment at 1-48 (MSPSGPNLNNKEHNRASEKKNSRTHNKKTNRNQSKEKPVSSRSVETPK) is disordered. The span at 10–21 (NKEHNRASEKKN) shows a compositional bias: basic and acidic residues. An RING-type zinc finger spans residues 81-121 (CFICAEGITYSCVLPCNHRMCHVCALRLRALYKTKECTFCK). An LIM zinc-binding domain is found at 245–315 (PKCEFCNTHF…RECLERKFVV (71 aa)). Disordered stretches follow at residues 345–380 (IIPQFSYDPPGASGRNRRERTSSTPSEQSTSVNETA), 411–501 (DFGF…QHQQ), and 623–732 (HDGP…FHIG). 2 stretches are compositionally biased toward polar residues: residues 366–380 (SSTPSEQSTSVNETA) and 415–433 (TLSNPAPTSARPATSTRTI). The segment covering 457–468 (SSSAPSVPVSAP) has biased composition (low complexity). Phosphoserine is present on serine 482. Polar residues-rich tracts occupy residues 490–501 (PMASSEQAQHQQ) and 629–654 (SAPSSSINLANITSRPTNSSAANTPS). Residues 701–713 (STPNTSSNRNSNT) show a composition bias toward low complexity.

Belongs to the ZNF598/HEL2 family.

The protein localises to the cytoplasm. It catalyses the reaction S-ubiquitinyl-[E2 ubiquitin-conjugating enzyme]-L-cysteine + [acceptor protein]-L-lysine = [E2 ubiquitin-conjugating enzyme]-L-cysteine + N(6)-ubiquitinyl-[acceptor protein]-L-lysine.. It functions in the pathway protein modification; protein ubiquitination. Functionally, E3 ubiquitin-protein ligase that plays a key role in the ribosome quality control (RQC), a pathway that takes place when a ribosome has stalled during translation, leading to degradation of nascent peptide chains. Activated when ribosomes are stalled within an mRNA following translation of prematurely polyadenylated mRNAs. Acts as a ribosome collision sensor: specifically recognizes and binds collided ribosome and ubiquitinates the 40S ribosomal proteins rps20/uS10 and rps3/uS3. Catalyzes 'Lys-63'-linked polyubiquitination of rps20/uS10, promoting recruitment of the RQT (ribosome quality control trigger) complex, which drives the disassembly of stalled ribosomes, followed by degradation of nascent peptides. The sequence is that of E3 ubiquitin-protein ligase hel2 from Schizosaccharomyces pombe (strain 972 / ATCC 24843) (Fission yeast).